Consider the following 2473-residue polypeptide: Neurogenic locus notch homolog protein 2 (2473 aa).

The N-terminal stretch at methionine 1–alanine 25 is a signal peptide. EGF-like domains are found at residues leucine 26–glutamine 63, histidine 64–glutamine 102, threonine 105–glutamine 143, and tryptophan 144–glutamate 180. Residues leucine 26–glutamine 1679 are Extracellular-facing. 83 disulfide bridges follow: cysteine 28/cysteine 41, cysteine 35/cysteine 51, cysteine 53/cysteine 62, cysteine 68/cysteine 79, cysteine 73/cysteine 90, cysteine 92/cysteine 101, cysteine 109/cysteine 121, cysteine 115/cysteine 131, cysteine 133/cysteine 142, cysteine 148/cysteine 159, cysteine 153/cysteine 168, cysteine 170/cysteine 179, cysteine 186/cysteine 198, cysteine 192/cysteine 207, cysteine 209/cysteine 218, cysteine 230/cysteine 246, cysteine 248/cysteine 257, cysteine 264/cysteine 275, cysteine 269/cysteine 284, cysteine 286/cysteine 295, cysteine 302/cysteine 315, cysteine 309/cysteine 324, cysteine 326/cysteine 335, cysteine 342/cysteine 353, cysteine 347/cysteine 362, cysteine 364/cysteine 373, cysteine 379/cysteine 390, cysteine 384/cysteine 401, cysteine 403/cysteine 412, cysteine 419/cysteine 433, cysteine 427/cysteine 442, cysteine 444/cysteine 453, cysteine 460/cysteine 471, cysteine 465/cysteine 480, cysteine 482/cysteine 491, cysteine 498/cysteine 509, cysteine 503/cysteine 518, cysteine 520/cysteine 529, cysteine 536/cysteine 547, cysteine 541/cysteine 556, cysteine 558/cysteine 567, cysteine 574/cysteine 584, cysteine 579/cysteine 593, cysteine 595/cysteine 604, cysteine 611/cysteine 622, cysteine 616/cysteine 631, cysteine 633/cysteine 642, cysteine 649/cysteine 659, cysteine 654/cysteine 668, cysteine 670/cysteine 679, cysteine 686/cysteine 697, cysteine 691/cysteine 706, cysteine 708/cysteine 717, cysteine 724/cysteine 734, cysteine 729/cysteine 743, cysteine 745/cysteine 754, cysteine 761/cysteine 772, cysteine 766/cysteine 781, cysteine 783/cysteine 792, cysteine 799/cysteine 810, cysteine 804/cysteine 819, cysteine 821/cysteine 830, cysteine 837/cysteine 848, cysteine 842/cysteine 859, cysteine 861/cysteine 870, cysteine 877/cysteine 888, cysteine 882/cysteine 897, cysteine 899/cysteine 908, cysteine 915/cysteine 926, cysteine 920/cysteine 935, cysteine 937/cysteine 946, cysteine 953/cysteine 964, cysteine 958/cysteine 973, cysteine 975/cysteine 984, cysteine 991/cysteine 1002, cysteine 996/cysteine 1011, cysteine 1013/cysteine 1022, cysteine 1029/cysteine 1040, cysteine 1034/cysteine 1049, cysteine 1051/cysteine 1060, cysteine 1067/cysteine 1078, cysteine 1072/cysteine 1087, and cysteine 1089/cysteine 1098. An N-linked (GlcNAc...) asparagine glycan is attached at asparagine 46. Asparagine 155 is a glycosylation site (N-linked (GlcNAc...) asparagine). The region spanning aspartate 182–aspartate 219 is the EGF-like 5; calcium-binding domain. Residues proline 221–glutamate 258 form the EGF-like 6; incomplete domain. The region spanning asparagine 260–threonine 296 is the EGF-like 7; calcium-binding domain. Residues aspartate 298–serine 336 form the EGF-like 8; calcium-binding domain. The EGF-like 9; calcium-binding domain maps to asparagine 338 to histidine 374. The 39-residue stretch at leucine 375 to threonine 413 folds into the EGF-like 10 domain. The 40-residue stretch at aspartate 415–glutamate 454 folds into the EGF-like 11; calcium-binding domain. One can recognise an EGF-like 12; calcium-binding domain in the interval aspartate 456 to glutamate 492. The EGF-like 13; calcium-binding domain occupies glutamate 494–glutamine 530. Positions aspartate 532 to aspartate 568 constitute an EGF-like 14; calcium-binding domain. In terms of domain architecture, EGF-like 15; calcium-binding spans asparagine 570–serine 605. The EGF-like 16; calcium-binding domain maps to glutamine 607–glutamate 643. Serine 613 is a glycosylation site (O-linked (Glc...) serine; alternate). Residue serine 613 is glycosylated (O-linked (Xyl...) serine; alternate). An EGF-like 17; calcium-binding domain is found at asparagine 645–asparagine 680. The EGF-like 18; calcium-binding domain maps to aspartate 682–tyrosine 718. In terms of domain architecture, EGF-like 19 spans glutamine 720–glutamate 755. The N-linked (GlcNAc...) asparagine glycan is linked to asparagine 733. The 37-residue stretch at aspartate 757–glutamine 793 folds into the EGF-like 20; calcium-binding domain. The region spanning asparagine 795–glutamine 831 is the EGF-like 21; calcium-binding domain. Residues valine 833–threonine 871 enclose the EGF-like 22 domain. The 37-residue stretch at aspartate 873–glutamate 909 folds into the EGF-like 23; calcium-binding domain. The region spanning aspartate 911 to glutamine 947 is the EGF-like 24; calcium-binding domain. The 37-residue stretch at aspartate 949–glutamate 985 folds into the EGF-like 25; calcium-binding domain. Residues asparagine 987 to leucine 1023 enclose the EGF-like 26; calcium-binding domain. The EGF-like 27; calcium-binding domain occupies aspartate 1025–glutamine 1061. EGF-like domains follow at residues leucine 1063–aspartate 1099 and leucine 1101–glutamate 1147. Residue asparagine 1102 is glycosylated (N-linked (GlcNAc...) asparagine). 24 disulfides stabilise this stretch: cysteine 1105-cysteine 1126, cysteine 1120-cysteine 1135, cysteine 1137-cysteine 1146, cysteine 1153-cysteine 1164, cysteine 1158-cysteine 1173, cysteine 1175-cysteine 1184, cysteine 1191-cysteine 1202, cysteine 1196-cysteine 1211, cysteine 1213-cysteine 1222, cysteine 1229-cysteine 1241, cysteine 1235-cysteine 1250, cysteine 1252-cysteine 1261, cysteine 1268-cysteine 1281, cysteine 1273-cysteine 1290, cysteine 1292-cysteine 1301, cysteine 1308-cysteine 1319, cysteine 1313-cysteine 1331, cysteine 1333-cysteine 1346, cysteine 1378-cysteine 1389, cysteine 1383-cysteine 1400, cysteine 1402-cysteine 1411, cysteine 1425-cysteine 1448, cysteine 1430-cysteine 1443, and cysteine 1439-cysteine 1455. Residues glutamine 1149–glutamate 1185 form the EGF-like 30; calcium-binding domain. The EGF-like 31; calcium-binding domain maps to glutamate 1187 to glutamate 1223. An EGF-like 32; calcium-binding domain is found at asparagine 1225–glutamate 1262. EGF-like domains are found at residues aspartate 1264–glutamate 1302, phenylalanine 1304–glutamine 1343, and glutamate 1375–glutamate 1412. LNR repeat units follow at residues cysteine 1425–asparagine 1465, cysteine 1466–threonine 1502, and cysteine 1503–glutamate 1544. The interval cysteine 1425–glutamine 1679 is negative regulatory region (NRR). Asparagine 1465 is a glycosylation site (N-linked (GlcNAc...) asparagine). Cystine bridges form between cysteine 1466-cysteine 1489, cysteine 1472-cysteine 1484, cysteine 1480-cysteine 1496, cysteine 1503-cysteine 1527, cysteine 1509-cysteine 1522, cysteine 1518-cysteine 1534, and cysteine 1634-cysteine 1641. The chain crosses the membrane as a helical span at residues leucine 1680–isoleucine 1700. Over methionine 1701–alanine 2473 the chain is Cytoplasmic. At threonine 1718 the chain carries Phosphothreonine. The segment at glycine 1755 to leucine 1778 is disordered. The residue at position 1780 (serine 1780) is a Phosphoserine. Threonine 1803 bears the Phosphothreonine mark. Serine 1805 carries the post-translational modification Phosphoserine. Position 1809 is a phosphothreonine (threonine 1809). ANK repeat units follow at residues aspartate 1828 to alanine 1872, threonine 1877 to alanine 1906, methionine 1910 to alanine 1940, aspartate 1944 to alanine 1973, histidine 1977 to methionine 2006, and lysine 2010 to isoleucine 2039. 2 positions are modified to phosphoserine: serine 1843 and serine 1846. Serine 2071, serine 2079, and serine 2082 each carry phosphoserine. Threonine 2098 bears the Phosphothreonine mark. Disordered stretches follow at residues threonine 2098–leucine 2117, lysine 2122–proline 2169, and valine 2382–alanine 2473. Residues proline 2099–asparagine 2108 are compositionally biased toward basic residues. Polar residues-rich tracts occupy residues valine 2140–proline 2151 and serine 2390–alanine 2400. Residues proline 2419–threonine 2446 show a composition bias toward low complexity. Residues proline 2447–glycine 2456 show a composition bias toward gly residues.

The protein belongs to the NOTCH family. Heterodimer of a C-terminal fragment N(TM) and an N-terminal fragment N(EC) which are probably linked by disulfide bonds. Interacts with MAML1, MAML2 and MAML3 which act as transcriptional coactivators for NOTCH2. Interacts with RELA/p65. Interacts with HIF1AN. Interacts (via ANK repeats) with TCIM, the interaction inhibits the nuclear translocation of NOTCH2 N2ICD. Interacts with CUL1, RBX1, SKP1 and FBXW7 that are SCF(FBXW7) E3 ubiquitin-protein ligase complex components. Interacts with MINAR1; this interaction increases MINAR1 stability and function. Interacts with MDK; this interaction mediates a nuclear accumulation of NOTCH2 and therefore activation of NOTCH2 signaling leading to interaction between HES1 and STAT3. Interacts with MINAR2. Synthesized in the endoplasmic reticulum as an inactive form which is proteolytically cleaved by a furin-like convertase in the trans-Golgi network before it reaches the plasma membrane to yield an active, ligand-accessible form. Cleavage results in a C-terminal fragment N(TM) and a N-terminal fragment N(EC). Following ligand binding, it is cleaved by TNF-alpha converting enzyme (TACE) to yield a membrane-associated intermediate fragment called notch extracellular truncation (NEXT). This fragment is then cleaved by presenilin dependent gamma-secretase to release a notch-derived peptide containing the intracellular domain (NICD) from the membrane. Post-translationally, hydroxylated by HIF1AN. In terms of processing, can be either O-glucosylated or O-xylosylated at Ser-613 by POGLUT1. Phosphorylated by GSK3. GSK3-mediated phosphorylation is necessary for NOTCH2 recognition by FBXW7, ubiquitination and degradation via the ubiquitin proteasome pathway. As to expression, expressed in the brain, liver, kidney, neuroepithelia, somites, optic vesicles and branchial arches, but not heart.

It is found in the cell membrane. It localises to the nucleus. The protein localises to the cytoplasm. Its function is as follows. Functions as a receptor for membrane-bound ligands Jagged-1 (JAG1), Jagged-2 (JAG2) and Delta-1 (DLL1) to regulate cell-fate determination. Upon ligand activation through the released notch intracellular domain (NICD) it forms a transcriptional activator complex with RBPJ/RBPSUH and activates genes of the enhancer of split locus. Affects the implementation of differentiation, proliferation and apoptotic programs. May play an essential role in postimplantation development, probably in some aspect of cell specification and/or differentiation. In collaboration with RELA/p65 enhances NFATc1 promoter activity and positively regulates RANKL-induced osteoclast differentiation. Positively regulates self-renewal of liver cancer cells. In Mus musculus (Mouse), this protein is Neurogenic locus notch homolog protein 2.